We begin with the raw amino-acid sequence, 351 residues long: MLKINVKKQLGQLALEANLQIPARGVTALFGLSGSGKTSLINLVSGLVHPDEGYISLNERVLVDQSKAVCIPAYQRHIGYVFQDARLFPHYTVKGNLCYGIKKIDLAKFDDIVSLLGIGHLLKRYPITLSGGEKQRVAIGRALLTQPEILLMDEPLSALDLPRKRELMSYLETLSKKIDIPILYVTHSIEELLRLAEYVVLLDEGKVRAFDRLESIWENPLFLPWKLEDEQSAVLSLPILHNNTGYQVTALGLQQQQIWIKAQQAEVGENIRICIKGSDVSLSLTQPEKTSIRNILHGKVKRIVERENRVDVQIEIDEKPIWATISKWALEDLALQLGQPVFAQIKAVSVL.

The ABC transporter domain maps to 1–229 (MLKINVKKQL…PLFLPWKLED (229 aa)). 31–38 (GLSGSGKT) contributes to the ATP binding site. In terms of domain architecture, Mop spans 289-351 (KTSIRNILHG…FAQIKAVSVL (63 aa)).

Belongs to the ABC transporter superfamily. Molybdate importer (TC 3.A.1.8) family. In terms of assembly, the complex is composed of two ATP-binding proteins (ModC), two transmembrane proteins (ModB) and a solute-binding protein (ModA).

The protein resides in the cell inner membrane. The enzyme catalyses molybdate(out) + ATP + H2O = molybdate(in) + ADP + phosphate + H(+). Its function is as follows. Part of the ABC transporter complex ModABC involved in molybdenum import. Responsible for energy coupling to the transport system. In Pasteurella multocida (strain Pm70), this protein is Molybdenum import ATP-binding protein ModC.